Here is a 90-residue protein sequence, read N- to C-terminus: Molybdopterin synthase sulfur carrier subunit (90 aa).

The residue at position 90 (glycine 90) is a 1-thioglycine; alternate. At glycine 90 the chain carries Glycyl adenylate; alternate.

It belongs to the MoaD family. MOCS2A subfamily. In terms of assembly, heterotetramer; composed of 2 small (Mocs2A) and 2 large (Mocs2B) subunits. C-terminal thiocarboxylation occurs in 2 steps, it is first acyl-adenylated (-COAMP) via the hesA/moeB/thiF part of MOCS3, then thiocarboxylated (-COSH) via the rhodanese domain of MOCS3.

The protein localises to the cytoplasm. Its pathway is cofactor biosynthesis; molybdopterin biosynthesis. Its function is as follows. Acts as a sulfur carrier required for molybdopterin biosynthesis. Component of the molybdopterin synthase complex that catalyzes the conversion of precursor Z into molybdopterin by mediating the incorporation of 2 sulfur atoms into precursor Z to generate a dithiolene group. In the complex, serves as sulfur donor by being thiocarboxylated (-COSH) at its C-terminus by MOCS3. After interaction with Mocs2B, the sulfur is then transferred to precursor Z to form molybdopterin. This is Molybdopterin synthase sulfur carrier subunit from Drosophila sechellia (Fruit fly).